The following is a 101-amino-acid chain: Cell cycle protein GpsB (101 aa).

Positions 34–71 form a coiled coil; the sequence is LDMVIKDYETFNQEIEKLQQENLHLSKQLEEAVEQGKR.

This sequence belongs to the GpsB family. In terms of assembly, forms polymers through the coiled coil domains. Interacts with PBP1, MreC and EzrA.

The protein localises to the cytoplasm. In terms of biological role, divisome component that associates with the complex late in its assembly, after the Z-ring is formed, and is dependent on DivIC and PBP2B for its recruitment to the divisome. Together with EzrA, is a key component of the system that regulates PBP1 localization during cell cycle progression. Its main role could be the removal of PBP1 from the cell pole after pole maturation is completed. Also contributes to the recruitment of PBP1 to the division complex. Not essential for septum formation. This is Cell cycle protein GpsB from Bacillus pumilus (strain SAFR-032).